Consider the following 213-residue polypeptide: Succinate dehydrogenase subunit 3-1, mitochondrial (213 aa).

The transit peptide at 1–105 directs the protein to the mitochondrion; it reads MAATALFRSI…LDVGTSKRLF (105 aa). Residue histidine 130 coordinates heme. Residues 148–165 traverse the membrane as a helical segment; the sequence is ISGVYLTGVTFAGYLLYL.

As to quaternary structure, component of complex II composed of eight subunits in plants: four classical SDH subunits SDH1, SDH2, SDH3 and SDH4 (a flavoprotein (FP), an iron-sulfur protein (IP), and a cytochrome b composed of a large and a small subunit.), as well as four subunits unknown in mitochondria from bacteria and heterotrophic eukaryotes. The cofactor is heme. In terms of tissue distribution, expressed in flowers, inflorescences and stems.

It localises to the mitochondrion inner membrane. The protein operates within carbohydrate metabolism; tricarboxylic acid cycle. Membrane-anchoring subunit of succinate dehydrogenase (SDH). The chain is Succinate dehydrogenase subunit 3-1, mitochondrial from Arabidopsis thaliana (Mouse-ear cress).